A 296-amino-acid chain; its full sequence is Thioredoxin-related transmembrane protein 2 (296 aa).

An N-terminal signal peptide occupies residues 1–48 (MAVLAPLIALVYSVPRLSRWLAQPYYLLSALLSAAFLLVRKLPPLCHG). The Extracellular portion of the chain corresponds to 49–102 (LPTQREDGNPCDFDWREVEILMFLSAIVMMKNRRSITVEQHIGNIFMFSKVANA). A helical membrane pass occupies residues 103 to 125 (ILFFRLDIRMGLLYITLCIVFLM). The region spanning 114–269 (LLYITLCIVF…LYQRAKKLSK (156 aa)) is the Thioredoxin domain. Topologically, residues 126–296 (TCKPPLYMGP…VSDGESKKDK (171 aa)) are cytoplasmic. Ser-211, Ser-243, and Ser-288 each carry phosphoserine. Residues 269 to 296 (KAGDNIPEEQPVAPTPTRVSDGESKKDK) are disordered. The Di-lysine motif signature appears at 293-296 (KKDK).

As to quaternary structure, monomer. Homodimer; disulfide-linked. Occurs in both reduced and oxidized monomeric form. Oxidative conditions increase homodimerization. Interacts with CANX. Interacts with ATP2A2.

The protein resides in the endoplasmic reticulum membrane. The protein localises to the mitochondrion membrane. Endoplasmic reticulum and mitochondria-associated protein that probably functions as a regulator of cellular redox state and thereby regulates protein post-translational modification, protein folding and mitochondrial activity. Indirectly regulates neuronal proliferation, migration, and organization in the developing brain. The protein is Thioredoxin-related transmembrane protein 2 (TMX2) of Macaca fascicularis (Crab-eating macaque).